The sequence spans 705 residues: Elongation factor G (705 aa).

Residues E8–L294 form the tr-type G domain. Residues A17–T24, D92–H96, and N146–D149 each bind GTP.

The protein belongs to the TRAFAC class translation factor GTPase superfamily. Classic translation factor GTPase family. EF-G/EF-2 subfamily.

The protein localises to the cytoplasm. In terms of biological role, catalyzes the GTP-dependent ribosomal translocation step during translation elongation. During this step, the ribosome changes from the pre-translocational (PRE) to the post-translocational (POST) state as the newly formed A-site-bound peptidyl-tRNA and P-site-bound deacylated tRNA move to the P and E sites, respectively. Catalyzes the coordinated movement of the two tRNA molecules, the mRNA and conformational changes in the ribosome. This Cereibacter sphaeroides (strain ATCC 17023 / DSM 158 / JCM 6121 / CCUG 31486 / LMG 2827 / NBRC 12203 / NCIMB 8253 / ATH 2.4.1.) (Rhodobacter sphaeroides) protein is Elongation factor G.